Reading from the N-terminus, the 177-residue chain is Cell division protein ZapC (177 aa).

Belongs to the ZapC family. As to quaternary structure, interacts directly with FtsZ.

The protein resides in the cytoplasm. Contributes to the efficiency of the cell division process by stabilizing the polymeric form of the cell division protein FtsZ. Acts by promoting interactions between FtsZ protofilaments and suppressing the GTPase activity of FtsZ. This chain is Cell division protein ZapC, found in Shewanella frigidimarina (strain NCIMB 400).